The sequence spans 457 residues: Phosphomethylpyrimidine synthase (457 aa).

Substrate is bound by residues asparagine 80, methionine 109, tyrosine 139, histidine 175, 195 to 197 (SRG), 236 to 239 (DSLR), and glutamate 275. Histidine 279 is a Zn(2+) binding site. Residue tyrosine 302 coordinates substrate. Histidine 343 provides a ligand contact to Zn(2+). [4Fe-4S] cluster-binding residues include cysteine 423, cysteine 426, and cysteine 431.

This sequence belongs to the ThiC family. The cofactor is [4Fe-4S] cluster.

It carries out the reaction 5-amino-1-(5-phospho-beta-D-ribosyl)imidazole + S-adenosyl-L-methionine = 4-amino-2-methyl-5-(phosphooxymethyl)pyrimidine + CO + 5'-deoxyadenosine + formate + L-methionine + 3 H(+). The protein operates within cofactor biosynthesis; thiamine diphosphate biosynthesis. Functionally, catalyzes the synthesis of the hydroxymethylpyrimidine phosphate (HMP-P) moiety of thiamine from aminoimidazole ribotide (AIR) in a radical S-adenosyl-L-methionine (SAM)-dependent reaction. The sequence is that of Phosphomethylpyrimidine synthase from Trichormus variabilis (strain ATCC 29413 / PCC 7937) (Anabaena variabilis).